A 385-amino-acid chain; its full sequence is Meiosis-specific protein MEI4 (385 aa).

Residues Met-1–Thr-126 form an interaction with REC114 region. The disordered stretch occupies residues Ala-86 to Gln-110. Over residues Ser-92 to Ser-107 the composition is skewed to polar residues.

Belongs to the MEI4L family. As to quaternary structure, part of the MCD recombinosome complex, at least composed of IHO1, REC114 and MEI4. Forms a complex with REC114; the interaction is required for MEI4 stability. Interacts (via N-terminal domain) with REC114 (via C-terminal domain). Interacts with IHO1.

It localises to the chromosome. Its function is as follows. Required for DNA double-strand breaks (DSBs) formation in unsynapsed regions during meiotic recombination. Probably acts by forming a complex with IHO1 and REC114, which activates DSBs formation in unsynapsed regions, an essential step to ensure completion of synapsis. The protein is Meiosis-specific protein MEI4 of Homo sapiens (Human).